A 96-amino-acid polypeptide reads, in one-letter code: Maintenance of carboxysome distribution protein B (96 aa).

The segment covering 1–18 has biased composition (basic and acidic residues); it reads MTNLEDKLSASIKTENKD. Residues 1-96 are disordered; sequence MTNLEDKLSA…STHPRRVWPD (96 aa). Residues 59-74 are compositionally biased toward low complexity; it reads ARATTTKPAVSKSSKP.

As to quaternary structure, monomer, associates with McdA:DNA. Interacts with shell components of the carboxysome.

The protein resides in the carboxysome. Functionally, mcdA and McdB together mediate carboxysome positioning on the nucleoid and to prevent their aggregation in the cell. Undergoes liquid-liquid phase separation at pH 7.0 in the presence of crowders polyethylene glycol or Ficoll. McdA is an ATPase that forms dynamic gradients on the nucleoid in response to adapter protein McdB, which associates with carboxysomes. The interplay between McdA gradients on the nucleoid and McdB-bound carboxysomes result in the equal spacing of Cbs along the cell length. Stimulates the ATPase activity of McdA, causing McdA to be released from DNA. Incorrect positioning (aggregation) of carboxysomes results in reduced CO(2) fixation by encapsulated form 1 ribulose-1,5-bisphosphate carboxylase (RuBisCO, cbbL/cbbS), which leads to slower growth. This Halothiobacillus neapolitanus (strain ATCC 23641 / c2) (Thiobacillus neapolitanus) protein is Maintenance of carboxysome distribution protein B.